A 126-amino-acid chain; its full sequence is UPF0344 protein ABC2900 (126 aa).

A run of 4 helical transmembrane segments spans residues 16–36 (ASHE…YFLF), 43–63 (AGTI…VTGA), 66–86 (LIAY…VLLI), and 104–124 (GMLF…YGII).

Belongs to the UPF0344 family.

It localises to the cell membrane. The chain is UPF0344 protein ABC2900 from Shouchella clausii (strain KSM-K16) (Alkalihalobacillus clausii).